We begin with the raw amino-acid sequence, 201 residues long: Small ribosomal subunit protein uS4c (201 aa).

Residues 20–44 (GLTSKRPRAGSDLRNQSRSGKKSQY) form a disordered region. Residues 89–152 (MRLDNILFRL…NSRTLVQNLL (64 aa)) form the S4 RNA-binding domain.

This sequence belongs to the universal ribosomal protein uS4 family. Part of the 30S ribosomal subunit. Contacts protein S5. The interaction surface between S4 and S5 is involved in control of translational fidelity.

It localises to the plastid. Its subcellular location is the chloroplast. One of the primary rRNA binding proteins, it binds directly to 16S rRNA where it nucleates assembly of the body of the 30S subunit. In terms of biological role, with S5 and S12 plays an important role in translational accuracy. The sequence is that of Small ribosomal subunit protein uS4c (rps4) from Arabis hirsuta (Hairy rock-cress).